The chain runs to 118 residues: Aspartate 1-decarboxylase (118 aa).

Catalysis depends on Ser-25, which acts as the Schiff-base intermediate with substrate; via pyruvic acid. Position 25 is a pyruvic acid (Ser) (Ser-25). Thr-57 lines the substrate pocket. The active-site Proton donor is the Tyr-58. Gly-73 to Ala-75 lines the substrate pocket.

This sequence belongs to the PanD family. As to quaternary structure, heterooctamer of four alpha and four beta subunits. Pyruvate serves as cofactor. In terms of processing, is synthesized initially as an inactive proenzyme, which is activated by self-cleavage at a specific serine bond to produce a beta-subunit with a hydroxyl group at its C-terminus and an alpha-subunit with a pyruvoyl group at its N-terminus.

The protein resides in the cytoplasm. It carries out the reaction L-aspartate + H(+) = beta-alanine + CO2. It functions in the pathway cofactor biosynthesis; (R)-pantothenate biosynthesis; beta-alanine from L-aspartate: step 1/1. Functionally, catalyzes the pyruvoyl-dependent decarboxylation of aspartate to produce beta-alanine. The chain is Aspartate 1-decarboxylase from Porphyromonas gingivalis (strain ATCC 33277 / DSM 20709 / CIP 103683 / JCM 12257 / NCTC 11834 / 2561).